The primary structure comprises 327 residues: Dolichyl-phosphate beta-glucosyltransferase ALG5D (327 aa).

Topologically, residues 1–6 are lumenal; that stretch reads MEKQLA. Residues 7–27 form a helical membrane-spanning segment; it reads ELSVYILIIFLILGFIMAILM. Topologically, residues 28–327 are cytoplasmic; that stretch reads RFGDDTTLFD…NIWTIRDRKF (300 aa).

It belongs to the glycosyltransferase 2 family.

The protein localises to the endoplasmic reticulum membrane. It carries out the reaction a di-trans,poly-cis-dolichyl phosphate + UDP-alpha-D-glucose = a di-trans,poly-cis-dolichyl beta-D-glucosyl phosphate + UDP. Its pathway is protein modification; protein glycosylation. Dolichyl-phosphate beta-glucosyltransferase involved in the glycosylation of glycoproteins through the synthesis of dolichyl beta-D-glucosyl phosphate which serves as a sugar donor for transfer of three glucose residues to the Man-9-GlcNAc-2-PP-dolichol precursor to N-glycans. This chain is Dolichyl-phosphate beta-glucosyltransferase ALG5D, found in Trichomonas vaginalis (strain ATCC PRA-98 / G3).